The following is a 285-amino-acid chain: Nucleotide-binding protein PFLU_0879 (285 aa).

8-15 (GRSGSGKS) is a binding site for ATP. Residue 60–63 (DARN) coordinates GTP.

It belongs to the RapZ-like family.

Functionally, displays ATPase and GTPase activities. This is Nucleotide-binding protein PFLU_0879 from Pseudomonas fluorescens (strain SBW25).